We begin with the raw amino-acid sequence, 270 residues long: MSVLQTELPSLSGKTCLITGGAGGLGKAIAIAFLKAGSNVVICDINEERVKQTSAELEGMGSLLAKTVDITKLSEVQQLFDDISSKFVKLDILINNAAIMDRFEPVGDVDPELWDRVLAVNLTAPLLLSKLAVQGMLLQENTNGSIINIASGSAKAGWLAGKHPITMQTLKHGLIGLTKSTAAFYGTKGIRCNALMLGIIGGTNLNDAFQNGVHPEGRQKLGEILSGVRPLPCDVKDIAELCVSLATGPGWNVVNGAVIAVDRGWTSIVG.

Ile18, Asp69, Asn96, Lys130, Lys171, Ile200, and Asn204 together coordinate NADP(+). The active-site Lowers pKa of active site Tyr is the Lys171.

This sequence belongs to the short-chain dehydrogenases/reductases (SDR) family.

It participates in secondary metabolite biosynthesis; terpenoid biosynthesis. In terms of biological role, short chain dehydrogenase/reductase; part of the gene cluster that mediates the biosynthesis of diterpenoid pyrones. The first step of the pathway is the synthesis of the alpha-pyrone moiety by the polyketide synthase dpfgA via condensation of one acetyl-CoA starter unit with 3 malonyl-CoA units and 2 methylations. The alpha-pyrone is then combined with geranylgeranyl pyrophosphate (GGPP) formed by the GGPP synthase dpfgD through the action of the prenyltransferase dpfgC to yield a linear alpha-pyrone diterpenoid. Subsequent steps in the diterpenoid pyrone biosynthetic pathway involve the decalin core formation, which is initiated by the epoxidation of the C10-C11 olefin by the FAD-dependent oxidoreductase dpfgE, and is followed by a cyclization cascade catalyzed by the terpene cyclase dpfgB. The short chain dehydrogenase/reductase dpfgG then oxidizes the 8S hydroxy group to a ketone and the short chain dehydrogenase/reductase dpfgH reduces the ketone to the 8R hydroxy group to yield higginsianin B. Higginsianin B is further methylated by the methyltransferase dpfgI to produce the intermediate named FDDP B. The cytochrome P450 monooxygenase dfgpJ then catalyzes a three-step oxidation at C-27 to generate a carboxylic acid as well as C-26 hydroxylation. Finally, methyltransferase dpfgK methylates the carboxylic acid generated by dpfgJ, yielding the final diterpenoid pyrones from the pathway which were named FDDP D and FDDP E. The polypeptide is Short chain dehydrogenase/reductase dpfgG (Gibberella zeae (strain ATCC MYA-4620 / CBS 123657 / FGSC 9075 / NRRL 31084 / PH-1) (Wheat head blight fungus)).